A 72-amino-acid polypeptide reads, in one-letter code: Heat-stable enterotoxin A3/A4 (72 aa).

A signal peptide spans 1 to 19; that stretch reads MKKSILFIFLSVLSFSPFA. Residues 20 to 53 constitute a propeptide that is removed on maturation; sequence QDAKPVESSKEKITLESKKCNIAKKSNKSGPESM. Cystine bridges form between C59-C64, C60-C68, and C63-C71.

This sequence belongs to the heat-stable enterotoxin family.

The protein localises to the secreted. In terms of biological role, toxin which activates the particulate form of guanylate cyclase and increases cyclic GMP levels within the host intestinal epithelial cells. In Escherichia coli, this protein is Heat-stable enterotoxin A3/A4 (sta3).